The primary structure comprises 272 residues: Shikimate dehydrogenase (NADP(+)) (272 aa).

Shikimate is bound by residues 14-16 and threonine 61; that span reads SLS. Lysine 65 functions as the Proton acceptor in the catalytic mechanism. Aspartate 102 contacts shikimate. NADP(+) contacts are provided by residues 127–131, 151–156, and leucine 215; these read GAGGA and NRTPSK. Tyrosine 217 contacts shikimate. Position 239 (glycine 239) interacts with NADP(+).

It belongs to the shikimate dehydrogenase family. In terms of assembly, homodimer.

The enzyme catalyses shikimate + NADP(+) = 3-dehydroshikimate + NADPH + H(+). It participates in metabolic intermediate biosynthesis; chorismate biosynthesis; chorismate from D-erythrose 4-phosphate and phosphoenolpyruvate: step 4/7. Involved in the biosynthesis of the chorismate, which leads to the biosynthesis of aromatic amino acids. Catalyzes the reversible NADPH linked reduction of 3-dehydroshikimate (DHSA) to yield shikimate (SA). The protein is Shikimate dehydrogenase (NADP(+)) of Coxiella burnetii (strain Dugway 5J108-111).